The chain runs to 486 residues: MSNNFKDDFEKNRQSIDTNSHQDHTEDVEKDQSELEHQDTIENTEQQFPPRNAQRRKRRRDLATNHNKQVHNESQTSEDNVQNEAGTIDDRQVESSHSTESQEPSHQDSTPQHEEEYYNKNAFAMDKSHPEPIEDNDKHDTIKNAENNTEHSTVSDKSEAEQSQQPKPYFTTGANQSETSKNEHDNDSVKQDQDEPKEHHNGKKAAAIGAGTAGVAGAAGAMAASKAKKHSNDAQNKSNSGKANNSTEDKASQDKSKDHHNGKKGAAIGAGTAGLAGGAASKSASAASKPHASNNASQNHDEHDNHDRDKERKKGGMAKVLLPLIAAVLIIGALAIFGGMALNNHNNGTKENKIANTNKNNADESKDKDTSKDASKDKSKSTDSDKSKEDQDKATKDESDNDQNNANQANNQAQNNQNQQQANQNQQQQQQRQGGGQRHTVNGQENLYRIAIQYYGSGSPENVEKIRRANGLSGNNIRNGQQIVIP.

Positions 1 to 40 are enriched in basic and acidic residues; the sequence is MSNNFKDDFEKNRQSIDTNSHQDHTEDVEKDQSELEHQDT. Positions 1-314 are disordered; that stretch reads MSNNFKDDFE…NHDRDKERKK (314 aa). Residues 2–204 are Extracellular-facing; sequence SNNFKDDFEK…EPKEHHNGKK (203 aa). Residues 14-34 are elastin-binding; that stretch reads QSIDTNSHQDHTEDVEKDQSE. Residues 64–85 are compositionally biased toward polar residues; that stretch reads TNHNKQVHNESQTSEDNVQNEA. 2 stretches are compositionally biased toward basic and acidic residues: residues 103–118 and 126–143; these read EPSHQDSTPQHEEEYY and DKSHPEPIEDNDKHDTIK. The segment covering 161-179 has biased composition (polar residues); sequence EQSQQPKPYFTTGANQSET. The segment covering 180–199 has biased composition (basic and acidic residues); that stretch reads SKNEHDNDSVKQDQDEPKEH. Residues 204 to 225 are compositionally biased toward low complexity; sequence KAAAIGAGTAGVAGAAGAMAAS. Residues 205 to 225 form a helical membrane-spanning segment; it reads AAAIGAGTAGVAGAAGAMAAS. Over 226 to 319 the chain is Cytoplasmic; the sequence is KAKKHSNDAQ…KERKKGGMAK (94 aa). A compositionally biased stretch (polar residues) spans 233–246; sequence DAQNKSNSGKANNS. The span at 247–259 shows a compositional bias: basic and acidic residues; sequence TEDKASQDKSKDH. Residues 278–297 show a composition bias toward low complexity; sequence GAASKSASAASKPHASNNAS. The span at 299–314 shows a compositional bias: basic and acidic residues; sequence NHDEHDNHDRDKERKK. A helical transmembrane segment spans residues 320-340; it reads VLLPLIAAVLIIGALAIFGGM. Residues 341–486 are Extracellular-facing; sequence ALNNHNNGTK…IRNGQQIVIP (146 aa). The interval 351-440 is disordered; sequence ENKIANTNKN…QRQGGGQRHT (90 aa). Residues 361–398 are compositionally biased toward basic and acidic residues; that stretch reads NADESKDKDTSKDASKDKSKSTDSDKSKEDQDKATKDE. Residues 403–431 are compositionally biased toward low complexity; the sequence is QNNANQANNQAQNNQNQQQANQNQQQQQQ. The region spanning 437–485 is the LysM domain; the sequence is QRHTVNGQENLYRIAIQYYGSGSPENVEKIRRANGLSGNNIRNGQQIVI.

The protein resides in the cell membrane. Functionally, promotes binding of soluble elastin peptides and tropoelastin to S.aureus cells although it is not able to promote bacterial adherence to immobilized elastin and, therefore, is not a microbial surface component recognizing adhesive matrix molecule (MSCRAMM). The sequence is that of Elastin-binding protein EbpS (ebpS) from Staphylococcus aureus (strain USA300).